Reading from the N-terminus, the 200-residue chain is Putative NAD(P)H nitroreductase Spy0809 (200 aa).

The cofactor is FMN.

The chain is Putative NAD(P)H nitroreductase Spy0809 from Streptococcus pyogenes serotype M6 (strain ATCC BAA-946 / MGAS10394).